A 240-amino-acid polypeptide reads, in one-letter code: MSFSERPRVTQNGPSMIHLFNVFSKFRKENDYDGLVNYLITNYSQNVKNRTFNFHNTGHIFHMLYAYVPSPSSKERKQIRLDCIENLLESTKNDFKLYEDLIKLMNGDDKCPCELITARLNDNIAYNESLKNKNFDSKPCKLKKEPIDSILFKYSINWKNSLNKKRSLPKSTTTKKSEEKENMDEIEVDASKISSQSSLSNLNGYTIASCVHDYVIEEHQLRAGDEMVSFIKFCKKCGHK.

It belongs to the baculoviridae LEF-5 family.

Functionally, required for late and very late gene expression. The polypeptide is Late expression factor 5 homolog (Tortricidae (ClGV)).